Reading from the N-terminus, the 268-residue chain is Putative hydro-lyase PSPTO_5379 (268 aa).

The protein belongs to the D-glutamate cyclase family.

This is Putative hydro-lyase PSPTO_5379 from Pseudomonas syringae pv. tomato (strain ATCC BAA-871 / DC3000).